The sequence spans 261 residues: Hemin import ATP-binding protein HmuV (261 aa).

Positions leucine 2–asparagine 243 constitute an ABC transporter domain. Glycine 34 to serine 41 serves as a coordination point for ATP.

It belongs to the ABC transporter superfamily. Heme (hemin) importer (TC 3.A.1.14.5) family. The complex is composed of two ATP-binding proteins (HmuV), two transmembrane proteins (HmuU) and a solute-binding protein (HmuT).

The protein resides in the cell inner membrane. In terms of biological role, part of the ABC transporter complex HmuTUV involved in hemin import. Responsible for energy coupling to the transport system. The sequence is that of Hemin import ATP-binding protein HmuV from Pseudoalteromonas translucida (strain TAC 125).